The primary structure comprises 293 residues: MTLMDGRAIAAQIKLEITKEVQQIVINGEKKPHLAAILVGHDCSSETYVANKVKTCEELGFQSTLIRYESDLIENKLLATVEKLNQDSNIDGFIIQLPLPKHISEQKVIEAIDYKKDVDGFHPVNAGRMAIGLPCFVPATPAGILELLKRYKITTAGKHCVVLGRSNIVGKPIANLLMRKAYPGDCTVTVCHSRTKNILKHCLEADIIIAAMGVPEFLKGNMVKDGVVVIDVGTTRVLSTETDSGFKLRGDVRFKEVAPKCSYISPVPGGVGPMTIISLMRNTLLARKKVIYS.

Residues 164–166 (GRS), S193, and T234 contribute to the NADP(+) site.

This sequence belongs to the tetrahydrofolate dehydrogenase/cyclohydrolase family. As to quaternary structure, homodimer.

It catalyses the reaction (6R)-5,10-methylene-5,6,7,8-tetrahydrofolate + NADP(+) = (6R)-5,10-methenyltetrahydrofolate + NADPH. It carries out the reaction (6R)-5,10-methenyltetrahydrofolate + H2O = (6R)-10-formyltetrahydrofolate + H(+). It participates in one-carbon metabolism; tetrahydrofolate interconversion. Catalyzes the oxidation of 5,10-methylenetetrahydrofolate to 5,10-methenyltetrahydrofolate and then the hydrolysis of 5,10-methenyltetrahydrofolate to 10-formyltetrahydrofolate. This is Bifunctional protein FolD from Azobacteroides pseudotrichonymphae genomovar. CFP2.